We begin with the raw amino-acid sequence, 524 residues long: Phosphoenolpyruvate carboxykinase (ATP) (524 aa).

Substrate-binding residues include Arg-52, Tyr-188, and Lys-194. ATP-binding positions include Lys-194, His-213, and 229-237 (GLSGTGKTT). 2 residues coordinate Mn(2+): Lys-194 and His-213. Asp-250 contacts Mn(2+). Positions 278, 314, and 439 each coordinate ATP. Arg-314 contributes to the substrate binding site.

This sequence belongs to the phosphoenolpyruvate carboxykinase (ATP) family. Requires Mn(2+) as cofactor.

It localises to the cytoplasm. The catalysed reaction is oxaloacetate + ATP = phosphoenolpyruvate + ADP + CO2. Its pathway is carbohydrate biosynthesis; gluconeogenesis. Involved in the gluconeogenesis. Catalyzes the conversion of oxaloacetate (OAA) to phosphoenolpyruvate (PEP) through direct phosphoryl transfer between the nucleoside triphosphate and OAA. The chain is Phosphoenolpyruvate carboxykinase (ATP) from Campylobacter jejuni subsp. jejuni serotype O:2 (strain ATCC 700819 / NCTC 11168).